Consider the following 137-residue polypeptide: Mediator of RNA polymerase II transcription subunit 21 (137 aa).

The interval 37-56 (PKDTIAPSKADQPPEVDTLP) is disordered. Residues 87–130 (GLDNSEQDQLQSIKELEEELNVAEKQRQEAVKEKDEVLVKLDQT) are a coiled coil.

Belongs to the Mediator complex subunit 21 family. Component of the Mediator complex.

Its subcellular location is the nucleus. Component of the Mediator complex, a coactivator involved in the regulated transcription of nearly all RNA polymerase II-dependent genes. Mediator functions as a bridge to convey information from gene-specific regulatory proteins to the basal RNA polymerase II transcription machinery. Mediator is recruited to promoters by direct interactions with regulatory proteins and serves as a scaffold for the assembly of a functional preinitiation complex with RNA polymerase II and the general transcription factors. The chain is Mediator of RNA polymerase II transcription subunit 21 (srb-7) from Neurospora crassa (strain ATCC 24698 / 74-OR23-1A / CBS 708.71 / DSM 1257 / FGSC 987).